Here is a 515-residue protein sequence, read N- to C-terminus: MDEFHRYGKEDNSRQQCFLYPLFFQEDLYAISHDHYLDGSSSSEPMEHLSSNDQFSFLTVKRLIGQIRQQNHSIVLFVNCAPNPLADCKKSSYSESVLEGLTLVLEVPFSIRSKYSVEGMNEWKSFRSIHSIFPFLEDKFPHSNYISDARIPYSIHPEILVRTFRRLIRDAPSLHPLRSVLYEYRNSPENLQRSIIVVPRVNTRFFLFLWNYYVYECESILFSLLKRSSHSRSLAHRPFPHGTHFHRKIKHIIIFSRRNSLKSIWLLKDPKINYVRYGERSIIAIKGTHLLVKKCRYYLLLFRQCYFHLWSEPYRVCSHQLSKNCSSSLGYFLRVRMNPLFVRTKMLDELFIADLITNEFDPIVPIVPILGLLAREKFCDVSGRPISKLSWTNLTDDDILNRFDQIWRNLFHYYSGSFGRDGLYRIKYILSLSCAKTLACKHKSTIRVVRKELGPELLSKIVFKRTRFDSLPFSSKAAARSQRERIWHSDIPQINPLVNSWQKIQDLKIENLFDQ.

The protein belongs to the intron maturase 2 family. MatK subfamily.

The protein resides in the plastid. It localises to the chloroplast. Functionally, usually encoded in the trnK tRNA gene intron. Probably assists in splicing its own and other chloroplast group II introns. In Pinus cembra (Swiss stone pine), this protein is Maturase K.